We begin with the raw amino-acid sequence, 566 residues long: Repressible alkaline phosphatase (566 aa).

The segment covering 1–11 has biased composition (polar residues); sequence MMTHTLPSEQT. Residues 1 to 27 are disordered; that stretch reads MMTHTLPSEQTRLVPGSDSSSRPKKRR. Over 1-33 the chain is Cytoplasmic; the sequence is MMTHTLPSEQTRLVPGSDSSSRPKKRRISKRSK. A helical transmembrane segment spans residues 34-59; the sequence is IIVSTVVCIGLLLVLVQLAFPSSFAL. Asp75 serves as a coordination point for Mg(2+). A Zn(2+)-binding site is contributed by Asp75. Ser123 serves as the catalytic Phosphoserine intermediate. Ser123 bears the Phosphoserine mark. Asp174 and Thr176 together coordinate Mg(2+). An N-linked (GlcNAc...) asparagine glycan is attached at Asn268. Glu325 lines the Mg(2+) pocket. Positions 330, 334, 373, and 374 each coordinate Zn(2+). N-linked (GlcNAc...) asparagine glycosylation is present at Asn401. Residue His484 coordinates Zn(2+).

It belongs to the alkaline phosphatase family. It depends on Mg(2+) as a cofactor. Zn(2+) is required as a cofactor.

Its subcellular location is the vacuole membrane. The protein resides in the cytoplasm. The catalysed reaction is a phosphate monoester + H2O = an alcohol + phosphate. It carries out the reaction (2E,6E)-farnesyl diphosphate + H2O = (2E,6E)-farnesol + diphosphate. It catalyses the reaction beta-D-fructose 2,6-bisphosphate + H2O = beta-D-fructose 2-phosphate + phosphate. Functionally, phosphatase with broad substrate specificity. A truncated (soluble) version of the protein is responsible for the production of (E,E)-farnesol from (E,E)-farnesyl diphosphate. Acts as a fructose-2,6-bisphosphate 6-phosphatase. The polypeptide is Repressible alkaline phosphatase (PHO8) (Saccharomyces cerevisiae (strain ATCC 204508 / S288c) (Baker's yeast)).